A 567-amino-acid polypeptide reads, in one-letter code: Zinc finger protein 143 (567 aa).

7 consecutive C2H2-type zinc fingers follow at residues phenylalanine 230–histidine 254, tyrosine 260–histidine 284, tyrosine 290–histidine 314, phenylalanine 320–histidine 344, tyrosine 350–histidine 374, tyrosine 380–histidine 404, and tyrosine 410–histidine 433. The span at serine 506–glycine 520 shows a compositional bias: polar residues. Residues serine 506–proline 525 form a disordered region.

Belongs to the GLI C2H2-type zinc-finger protein family.

It is found in the nucleus. In terms of biological role, transcriptional activator. Activates the gene for selenocysteine tRNA (tRNAsec). Binds to the activator element (AE) motif of the selenocysteine tRNA gene promoter. In Xenopus tropicalis (Western clawed frog), this protein is Zinc finger protein 143 (znf143).